We begin with the raw amino-acid sequence, 666 residues long: Non-receptor tyrosine-protein kinase TNK1 (666 aa).

Serine 60 and serine 96 each carry phosphoserine. Residues valine 116–leucine 377 enclose the Protein kinase domain. Residues leucine 122–valine 130 and lysine 148 each bind ATP. Aspartate 245 serves as the catalytic Proton acceptor. Phosphoserine is present on residues serine 255 and serine 411. One can recognise an SH3 domain in the interval alanine 380–alanine 445. A disordered region spans residues glycine 446–leucine 493. Position 502 is a phosphoserine (serine 502). Positions valine 506–alanine 579 are disordered. A Phosphothreonine modification is found at threonine 514. A Phosphoserine modification is found at serine 519. Pro residues predominate over residues glutamine 531–proline 541. Residues leucine 542–proline 552 are compositionally biased toward low complexity. Phosphoserine is present on serine 582.

Belongs to the protein kinase superfamily. Tyr protein kinase family. As to quaternary structure, interacts with the SH3 domain of PLCG1 via its Pro-rich domain. In terms of processing, autophosphorylated on tyrosine residues. In terms of tissue distribution, expressed in all umbilical cord blood, bone marrow and adult blood cell sub-populations and in several leukemia cell lines. Highly expressed in fetal blood, brain, lung, liver and kidney. Detected at lower levels in adult prostate, testis, ovary, small intestine and colon. Not expressed in adult lung, liver, kidney or brain.

The protein localises to the cytoplasm. The protein resides in the membrane. The catalysed reaction is L-tyrosyl-[protein] + ATP = O-phospho-L-tyrosyl-[protein] + ADP + H(+). Involved in negative regulation of cell growth. Has tumor suppressor properties. Plays a negative regulatory role in the Ras-MAPK pathway. May function in signaling pathways utilized broadly during fetal development and more selectively in adult tissues and in cells of the lymphohematopoietic system. Could specifically be involved in phospholipid signal transduction. The sequence is that of Non-receptor tyrosine-protein kinase TNK1 from Homo sapiens (Human).